The sequence spans 380 residues: RNA binding protein fox-1 homolog 2 (380 aa).

Composition is skewed to polar residues over residues 1–20 (MEKN…TPDT) and 36–56 (NGLS…QSTE). The interval 1-117 (MEKNKMVSQG…TPKRLHVSNI (117 aa)) is disordered. Residues 72-102 (STPATSTANASSTTDGSQTEGQQSQTQNSEN) are compositionally biased toward low complexity. Positions 110-186 (KRLHVSNIPF…RKIEVNNATA (77 aa)) constitute an RRM domain.

Its subcellular location is the nucleus. The protein resides in the cytoplasm. Its function is as follows. RNA-binding protein that regulates alternative splicing events by binding to 5'-UGCAUGU-3' elements. Regulates alternative splicing of tissue-specific exons. This is RNA binding protein fox-1 homolog 2 (rbfox2) from Xenopus tropicalis (Western clawed frog).